The primary structure comprises 196 residues: MLWELLNLLDLRYRFLQQLDLYFLNLNYTLSKLCSKQTEATAPYSKLYYKNLGLAFFYFFFFLLAFLALFIFFFRGFQGTLFFNSVLLSNKGLYFVLFYVAALALLFVFRHHVLKQFFFNNSLDFLIALVFLTLFSTLIFFSNNLFAFFFTLELVAVTNFYFISSAREFFFFEKSQGGASSLKAQKKKTFFNVRFF.

It localises to the mitochondrion. This is an uncharacterized protein from Paramecium tetraurelia.